Consider the following 513-residue polypeptide: OBERON-like protein (513 aa).

A PHD-type zinc finger spans residues 166–235 (NGFCNLCMCV…VFRCQACSXT (70 aa)). A coiled-coil region spans residues 372-469 (RELADKAREA…LYEKIKLQES (98 aa)). The disordered stretch occupies residues 493 to 513 (YNGPPKADSQSNDCHPFRTNP). Residues 500–513 (DSQSNDCHPFRTNP) are compositionally biased toward polar residues.

As to quaternary structure, self-interacts and probably forms heteromers. Binds to VPg of pea seed borne mosaic virus (PSbMV), turnip mosaic virus (TuMV) and lettuce mosaic virus (LMV), but not with VPg of tobacco etch virus (TEV), cowpea mosaic virus (CPMV), tomato black ring virus (TBRV) and grapevine fan leaf virus (GFLV).

The protein resides in the nucleus. In terms of biological role, required for the maintenance and/or establishment of both the shoot and root meristems, probably by controlling the expression of the meristem genes and of genes required for auxin responses. Involved in the development of the basal pole and in auxin-mediated root and vascular development in the embryo. Confers sensitivity to turnip mosaic virus (TuMV) probably by promoting viral movement and multiplication via interaction with TuMV VPg. This Pisum sativum (Garden pea) protein is OBERON-like protein (PVIP).